Consider the following 233-residue polypeptide: Chaperone protein MrkB (233 aa).

Residues 1–18 form the signal peptide; it reads MKRIALFFCFIFSFAAHA.

Belongs to the periplasmic pilus chaperone family.

It localises to the periplasm. Functionally, mediates assembly of pili by forming soluble multimeric complexes with pili subunits as an intermediate step in the assembly process. This protein is involved in type 3 pili assembly. This is Chaperone protein MrkB (mrkB) from Klebsiella pneumoniae.